Consider the following 59-residue polypeptide: Protein ORF5a (59 aa).

Residues Val-13 to Ile-33 traverse the membrane as a helical; Signal-anchor for type III membrane protein segment.

It localises to the membrane. This Equine arteritis virus (strain Bucyrus) (EAV) protein is Protein ORF5a (GP5).